Reading from the N-terminus, the 249-residue chain is Triosephosphate isomerase (249 aa).

9–11 (NWK) is a binding site for substrate. Residue His-95 is the Electrophile of the active site. Glu-166 acts as the Proton acceptor in catalysis. Substrate is bound by residues Gly-172, Ser-211, and 232–233 (GG).

Belongs to the triosephosphate isomerase family. In terms of assembly, homodimer.

It is found in the cytoplasm. The catalysed reaction is D-glyceraldehyde 3-phosphate = dihydroxyacetone phosphate. It participates in carbohydrate biosynthesis; gluconeogenesis. It functions in the pathway carbohydrate degradation; glycolysis; D-glyceraldehyde 3-phosphate from glycerone phosphate: step 1/1. Functionally, involved in the gluconeogenesis. Catalyzes stereospecifically the conversion of dihydroxyacetone phosphate (DHAP) to D-glyceraldehyde-3-phosphate (G3P). The polypeptide is Triosephosphate isomerase (Legionella pneumophila subsp. pneumophila (strain Philadelphia 1 / ATCC 33152 / DSM 7513)).